Here is a 154-residue protein sequence, read N- to C-terminus: MGLSDGEWQLVLNVWGKVEADISGHGQEVLIRLFKGHPETLEKFDKFKHLKSEDEMKASEDLKKHGATVLTALGGILKKKGHHEAEIKPLAQSHATKHKIPVKYLEFISECIIQVLQSKHPGDFGADAQGAMNKALELFRKDMASNYKELGFQG.

Residues 2 to 148 form the Globin domain; the sequence is GLSDGEWQLV…FRKDMASNYK (147 aa). Serine 4 carries the phosphoserine modification. Histidine 65 contacts nitrite. O2 is bound at residue histidine 65. Threonine 68 carries the phosphothreonine modification. Residue histidine 94 participates in heme b binding.

Belongs to the globin family. As to quaternary structure, monomeric.

The protein resides in the cytoplasm. It localises to the sarcoplasm. It catalyses the reaction Fe(III)-heme b-[protein] + nitric oxide + H2O = Fe(II)-heme b-[protein] + nitrite + 2 H(+). The catalysed reaction is H2O2 + AH2 = A + 2 H2O. In terms of biological role, monomeric heme protein which primary function is to store oxygen and facilitate its diffusion within muscle tissues. Reversibly binds oxygen through a pentacoordinated heme iron and enables its timely and efficient release as needed during periods of heightened demand. Depending on the oxidative conditions of tissues and cells, and in addition to its ability to bind oxygen, it also has a nitrite reductase activity whereby it regulates the production of bioactive nitric oxide. Under stress conditions, like hypoxia and anoxia, it also protects cells against reactive oxygen species thanks to its pseudoperoxidase activity. The sequence is that of Myoglobin (MB) from Gorilla gorilla beringei (Mountain gorilla).